The following is an 843-amino-acid chain: OTU domain-containing protein 7B (843 aa).

Residues 50–88 are disordered; that stretch reads GNLPPSFSEGSGGSRTPEKGFSDREPTRPPRPILQRQDD. Residues 65 to 77 show a composition bias toward basic and acidic residues; the sequence is TPEKGFSDREPTR. Ser100 is modified (phosphoserine). The tract at residues 152–401 is TRAF-binding; it reads ERDLIEQSML…AVDPGKGWEW (250 aa). Residues 167–440 are catalytic; the sequence is AGRLNWWVSV…VKWIPLSSDA (274 aa). The 183-residue stretch at 183–365 folds into the OTU domain; that stretch reads LLPLATTGDG…QAHFSALVSM (183 aa). The regulatory loop stretch occupies residues 187–193; it reads ATTGDGN. Asp191 is an active-site residue. Cys194 acts as the Nucleophile in catalysis. His358 functions as the Proton acceptor in the catalytic mechanism. 2 disordered regions span residues 442–587 and 652–711; these read APLA…GGSK and IMNG…CQEP. Composition is skewed to basic and acidic residues over residues 456–471 and 488–500; these read DEPR…DKES and SKRD…KRAD. Phosphoserine is present on residues Ser464, Ser467, and Ser471. The short motif at 483-498 is the Nuclear localization signal element; that stretch reads RRKEKSKRDREKDKKR. A compositionally biased stretch (gly residues) spans 531–543; that stretch reads KPGGVGTGLGGSS. The segment covering 665 to 675 has biased composition (basic and acidic residues); it reads KKPEPDAREEQ. The residue at position 729 (Thr729) is a Phosphothreonine. The disordered stretch occupies residues 732 to 792; the sequence is RQCPPGRPYP…PEPDGWAGGL (61 aa). Residues 796-831 form an A20-type zinc finger; sequence PPTQTKCKQPNCSFYGHPETNNFCSCCYREELRRRE. 4 residues coordinate Zn(2+): Cys802, Cys807, Cys819, and Cys822.

It belongs to the peptidase C64 family. Interacts with ZAP70 in activated T cells, but not in resting T cells. Interacts with TRAF3. Interacts with TRAF6. Interacts with PARK7, leading to inhibit deubiquitinase activity. Interacts with EGFR, ITCH and NEDD4. Post-translationally, phosphorylated by EGFR. As to expression, widely expressed. Abundant in kidney, heart and fetal liver. Expressed differentially among B-cells at distinct developmental stages. Higher expression seen in primary immature B-cells as compared to the mature cells.

The protein localises to the cytoplasm. It localises to the nucleus. It carries out the reaction Thiol-dependent hydrolysis of ester, thioester, amide, peptide and isopeptide bonds formed by the C-terminal Gly of ubiquitin (a 76-residue protein attached to proteins as an intracellular targeting signal).. Deubiquitinase activity is inhibited following interaction with PARK7. Negative regulator of the non-canonical NF-kappa-B pathway that acts by mediating deubiquitination of TRAF3, an inhibitor of the NF-kappa-B pathway, thereby acting as a negative regulator of B-cell responses. In response to non-canonical NF-kappa-B stimuli, deubiquitinates 'Lys-48'-linked polyubiquitin chains of TRAF3, preventing TRAF3 proteolysis and over-activation of non-canonical NF-kappa-B. Negatively regulates mucosal immunity against infections. Deubiquitinates ZAP70, and thereby regulates T cell receptor (TCR) signaling that leads to the activation of NF-kappa-B. Plays a role in T cell homeostasis and is required for normal T cell responses, including production of IFNG and IL2. Mediates deubiquitination of EGFR. Has deubiquitinating activity toward 'Lys-11', 'Lys-48' and 'Lys-63'-linked polyubiquitin chains. Has a much higher catalytic rate with 'Lys-11'-linked polyubiquitin chains (in vitro); however the physiological significance of these data are unsure. Hydrolyzes both linear and branched forms of polyubiquitin. Acts as a regulator of mTORC1 and mTORC2 assembly by mediating 'Lys-63'-linked deubiquitination of MLST8, thereby promoting assembly of the mTORC2 complex, while inibiting formation of the mTORC1 complex. This Homo sapiens (Human) protein is OTU domain-containing protein 7B (OTUD7B).